Here is a 467-residue protein sequence, read N- to C-terminus: Glutamate--tRNA ligase (467 aa).

Positions 12–22 (PSPTGYLHIGG) match the 'HIGH' region motif. Residues 114 to 128 (EQEAKKEKPRYDGRW) show a composition bias toward basic and acidic residues. A disordered region spans residues 114–140 (EQEAKKEKPRYDGRWRPAPGKTLPTPP). The 'KMSKS' region motif lies at 244–248 (KLSKR). An ATP-binding site is contributed by Lys-247.

It belongs to the class-I aminoacyl-tRNA synthetase family. Glutamate--tRNA ligase type 1 subfamily. As to quaternary structure, monomer.

It is found in the cytoplasm. The catalysed reaction is tRNA(Glu) + L-glutamate + ATP = L-glutamyl-tRNA(Glu) + AMP + diphosphate. Its function is as follows. Catalyzes the attachment of glutamate to tRNA(Glu) in a two-step reaction: glutamate is first activated by ATP to form Glu-AMP and then transferred to the acceptor end of tRNA(Glu). In Azoarcus sp. (strain BH72), this protein is Glutamate--tRNA ligase.